Consider the following 817-residue polypeptide: LisH domain-containing protein ARMC9 (817 aa).

In terms of domain architecture, LisH spans 15 to 47 (SESDLLSMISEYLKFGEFEETARTFEKEVKRKG). Disordered regions lie at residues 580–605 (SATI…EEDV), 610–629 (LDKE…ESLL), and 642–817 (KTKR…SNRK). The segment covering 586–605 (QEPESDDEEDEDDDDDEEDV) has biased composition (acidic residues). Polar residues-rich tracts occupy residues 692 to 715 (SSRP…TLAT) and 740 to 750 (GQTTNSVQSYS). Low complexity predominate over residues 805-817 (GRPSQQSSQSNRK).

As to expression, expressed in multiple CNS regions, including the cerebellum, all periventricular regions, and all layers of the retina.

The protein resides in the cytoplasm. Its subcellular location is the cytoskeleton. It is found in the cilium basal body. It localises to the cell projection. The protein localises to the cilium. The protein resides in the microtubule organizing center. Its subcellular location is the centrosome. It is found in the centriole. Involved in ciliogenesis. It is required for appropriate acetylation and polyglutamylation of ciliary microtubules, and regulation of cilium length. Acts as a positive regulator of hedgehog (Hh) signaling. The protein is LisH domain-containing protein ARMC9 (armc9) of Danio rerio (Zebrafish).